The following is a 356-amino-acid chain: Replication factor C subunit 3 (356 aa).

Lys-20 is subject to N6-acetyllysine. Ser-125 carries the post-translational modification Phosphoserine.

Belongs to the activator 1 small subunits family. As to quaternary structure, subunit of the RFC complex, an heteropentameric complex consisting of a large subunit RFC1 and four small subunits RFC2, RFC3, RFC4 and RFC5; the RFC complex interacts with PCNA. Forms an heterotetrameric complex with RFC2, RFC4 and RFC5; this complex has ATPase activity but is not stimulated by PCNA. The heterotetramer of subunits RFC2, RFC3, RFC4 and RFC5 interacts with RAD17. Interacts with CNTD1; this interaction facilitates crossover formation.

The protein resides in the nucleus. In terms of biological role, subunit of the replication factor C (RFC) complex which acts during elongation of primed DNA templates by DNA polymerases delta and epsilon, and is necessary for ATP-dependent loading of proliferating cell nuclear antigen (PCNA) onto primed DNA. The protein is Replication factor C subunit 3 (RFC3) of Bos taurus (Bovine).